A 165-amino-acid polypeptide reads, in one-letter code: Transcriptional regulator MraZ (165 aa).

SpoVT-AbrB domains follow at residues 5–51 (TYEG…GEEL) and 80–123 (SAEL…NPER).

The protein belongs to the MraZ family. As to quaternary structure, forms oligomers.

Its subcellular location is the cytoplasm. It localises to the nucleoid. The sequence is that of Transcriptional regulator MraZ from Hyphomonas neptunium (strain ATCC 15444).